A 106-amino-acid chain; its full sequence is uncharacterized protein (106 aa).

Belongs to the HesB/IscA family.

This is an uncharacterized protein from Bradyrhizobium diazoefficiens (strain JCM 10833 / BCRC 13528 / IAM 13628 / NBRC 14792 / USDA 110).